Consider the following 131-residue polypeptide: Period circadian protein (131 aa).

Positions 29–109 (VTAPVELDPP…NSAGGASGGV (81 aa)) are disordered. Over residues 71–93 (SGNFTTGSNVRMSSVTNTSNAGT) the composition is skewed to low complexity. The span at 94 to 109 (GTSGGGNSAGGASGGV) shows a compositional bias: gly residues.

In terms of assembly, forms a heterodimer with timeless (TIM); the complex then translocates into the nucleus. Phosphorylated with a circadian rhythmicity, probably by the double-time protein (dbt). Phosphorylation could be implicated in the stability of per monomer and in the formation of heterodimer per-tim.

It localises to the nucleus. The protein resides in the cytoplasm. It is found in the perinuclear region. Essential for biological clock functions. Determines the period length of circadian and ultradian rhythms; an increase in PER dosage leads to shortened circadian rhythms and a decrease leads to lengthened circadian rhythms. Essential for the circadian rhythmicity of locomotor activity, eclosion behavior, and for the rhythmic component of the male courtship song that originates in the thoracic nervous system. The biological cycle depends on the rhythmic formation and nuclear localization of the TIM-PER complex. Light induces the degradation of TIM, which promotes elimination of PER. Nuclear activity of the heterodimer coordinatively regulates PER and TIM transcription through a negative feedback loop. Behaves as a negative element in circadian transcriptional loop. Does not appear to bind DNA, suggesting indirect transcriptional inhibition. This Zaprionus tuberculatus (Vinegar fly) protein is Period circadian protein (per).